The chain runs to 87 residues: Anaphase-promoting complex subunit 11 (87 aa).

The RING-type; atypical zinc finger occupies 35–77 (CVDCKIPGDDCPPVWGVCNHAFHMHCILKWLNANELQQCPMCR).

Belongs to the RING-box family. The APC/C is composed of at least 13 subunits that stay tightly associated throughout the cell cycle: anapc1, anapc2, anapc3, anapc4, anapc5, anapc6, anapc7, anapc8, anapc10, anapc11, cdc20, cdc26 and cdh1.

The protein localises to the nucleus. It functions in the pathway protein modification; protein ubiquitination. Functionally, component of the anaphase promoting complex/cyclosome (APC/C), a cell cycle-regulated E3 ubiquitin-protein ligase complex that controls progression through mitosis and the G1 phase of the cell cycle. This chain is Anaphase-promoting complex subunit 11 (anapc11), found in Dictyostelium discoideum (Social amoeba).